The following is a 274-amino-acid chain: Dermonecrotic toxin SdSicTox-betaIIB1biv (274 aa).

The active site involves histidine 5. Positions 25 and 27 each coordinate Mg(2+). Catalysis depends on histidine 41, which acts as the Nucleophile. Intrachain disulfides connect cysteine 45–cysteine 51 and cysteine 47–cysteine 190. Aspartate 85 contributes to the Mg(2+) binding site.

Belongs to the arthropod phospholipase D family. Class II subfamily. Requires Mg(2+) as cofactor. Expressed by the venom gland.

Its subcellular location is the secreted. The catalysed reaction is an N-(acyl)-sphingosylphosphocholine = an N-(acyl)-sphingosyl-1,3-cyclic phosphate + choline. It carries out the reaction an N-(acyl)-sphingosylphosphoethanolamine = an N-(acyl)-sphingosyl-1,3-cyclic phosphate + ethanolamine. It catalyses the reaction a 1-acyl-sn-glycero-3-phosphocholine = a 1-acyl-sn-glycero-2,3-cyclic phosphate + choline. The enzyme catalyses a 1-acyl-sn-glycero-3-phosphoethanolamine = a 1-acyl-sn-glycero-2,3-cyclic phosphate + ethanolamine. Dermonecrotic toxins cleave the phosphodiester linkage between the phosphate and headgroup of certain phospholipids (sphingolipid and lysolipid substrates), forming an alcohol (often choline) and a cyclic phosphate. This toxin acts on sphingomyelin (SM). It may also act on ceramide phosphoethanolamine (CPE), lysophosphatidylcholine (LPC) and lysophosphatidylethanolamine (LPE), but not on lysophosphatidylserine (LPS), and lysophosphatidylglycerol (LPG). It acts by transphosphatidylation, releasing exclusively cyclic phosphate products as second products. Induces dermonecrosis, hemolysis, increased vascular permeability, edema, inflammatory response, and platelet aggregation. The polypeptide is Dermonecrotic toxin SdSicTox-betaIIB1biv (Sicarius cf. damarensis (strain GJB-2008) (Six-eyed sand spider)).